Consider the following 102-residue polypeptide: Acid shock protein (102 aa).

The signal sequence occupies residues 1 to 21; that stretch reads MKKVLGLVVAAAMGLSSAAFA. A compositionally biased stretch (low complexity) spans 22–41; sequence AETATTPAPTATTTKAAPAK. Positions 22-58 are excised as a propeptide; the sequence is AETATTPAPTATTTKAAPAKTTHHKKQHKAAPAQKAQ. The segment at 22–102 is disordered; that stretch reads AETATTPAPT…PAKPAAQPAA (81 aa). The segment covering 80-90 has biased composition (basic residues); that stretch reads AAKKHAGKHSH. Low complexity predominate over residues 91–102; it reads QQPAKPAAQPAA.

It belongs to the Asr family. In terms of processing, proteolytic processing gives rise to the active protein.

It is found in the periplasm. Required for growth and/or survival at acidic conditions. This Escherichia coli (strain SE11) protein is Acid shock protein.